A 347-amino-acid polypeptide reads, in one-letter code: Purine-rich element-binding protein gamma (347 aa).

2 disordered regions span residues 1-34 and 133-169; these read MERA…YPQA and GHRQ…HPHS. A compositionally biased stretch (gly residues) spans 9-24; that stretch reads GGGGRGRGGKNVGGSG. The DNA-binding element occupies 51 to 293; that stretch reads AGGAAEIQEL…GIFLKVSEVR (243 aa). The span at 134–146 shows a compositional bias: basic and acidic residues; sequence HRQEHGHSKEQGS. A phosphoserine mark is found at S160, S163, and S339.

Belongs to the PUR DNA-binding protein family. Isoform 1 is expressed in testis and glioblastoma. Isoform 2 is expressed in fetal lung.

It localises to the nucleus. This Homo sapiens (Human) protein is Purine-rich element-binding protein gamma (PURG).